The following is a 445-amino-acid chain: Tubulin beta-2 chain (445 aa).

The short motif at 1 to 4 (MREI) is the MREI motif element. 8 residues coordinate GTP: Gln11, Glu69, Ser138, Gly142, Thr143, Gly144, Asn204, and Asn226. Residue Glu69 participates in Mg(2+) binding. The interval 424–445 (QYQDATADEQGEFEEEGEEDEA) is disordered. Positions 429–445 (TADEQGEFEEEGEEDEA) are enriched in acidic residues. Glu438 carries the post-translational modification 5-glutamyl polyglutamate.

It belongs to the tubulin family. As to quaternary structure, dimer of alpha and beta chains. A typical microtubule is a hollow water-filled tube with an outer diameter of 25 nm and an inner diameter of 15 nM. Alpha-beta heterodimers associate head-to-tail to form protofilaments running lengthwise along the microtubule wall with the beta-tubulin subunit facing the microtubule plus end conferring a structural polarity. Microtubules usually have 13 protofilaments but different protofilament numbers can be found in some organisms and specialized cells. Mg(2+) is required as a cofactor. In terms of processing, some glutamate residues at the C-terminus are polyglycylated, resulting in polyglycine chains on the gamma-carboxyl group. Glycylation is mainly limited to tubulin incorporated into axonemes (cilia and flagella) whereas glutamylation is prevalent in neuronal cells, centrioles, axonemes, and the mitotic spindle. Both modifications can coexist on the same protein on adjacent residues, and lowering polyglycylation levels increases polyglutamylation, and reciprocally. The precise function of polyglycylation is still unclear. Post-translationally, some glutamate residues at the C-terminus are polyglutamylated, resulting in polyglutamate chains on the gamma-carboxyl group. Polyglutamylation plays a key role in microtubule severing by spastin (SPAST). SPAST preferentially recognizes and acts on microtubules decorated with short polyglutamate tails: severing activity by SPAST increases as the number of glutamates per tubulin rises from one to eight, but decreases beyond this glutamylation threshold. As to expression, highly expressed in neuronal cells.

The protein resides in the cytoplasm. Its subcellular location is the cytoskeleton. In terms of biological role, tubulin is the major constituent of microtubules, a cylinder consisting of laterally associated linear protofilaments composed of alpha- and beta-tubulin heterodimers. Microtubules grow by the addition of GTP-tubulin dimers to the microtubule end, where a stabilizing cap forms. Below the cap, tubulin dimers are in GDP-bound state, owing to GTPase activity of alpha-tubulin. The polypeptide is Tubulin beta-2 chain (Gallus gallus (Chicken)).